Here is a 95-residue protein sequence, read N- to C-terminus: Protein TusB (95 aa).

The protein belongs to the DsrH/TusB family. In terms of assembly, heterohexamer, formed by a dimer of trimers. The hexameric TusBCD complex contains 2 copies each of TusB, TusC and TusD. The TusBCD complex interacts with TusE.

The protein localises to the cytoplasm. Functionally, part of a sulfur-relay system required for 2-thiolation of 5-methylaminomethyl-2-thiouridine (mnm(5)s(2)U) at tRNA wobble positions. In Pectobacterium parmentieri, this protein is Protein TusB.